The chain runs to 142 residues: Midkine-A (142 aa).

The signal sequence occupies residues 1 to 20 (MELRAFCVILLITVLAVSSQ). Cystine bridges form between Cys-36–Cys-60, Cys-44–Cys-69, Cys-51–Cys-73, Cys-83–Cys-115, and Cys-93–Cys-125.

Belongs to the pleiotrophin family. In terms of tissue distribution, expression at the mid-gastrula stage begins in the neural anlage, and becomes increasingly prominent in the central nervous system and head mesenchyme during neurula stages. Although the mRNA is localized to the developing central nervous system (CNS), the protein is deposited at the neuromuscular junction (NMJ). In the tailbud stage embryo, expressed in the head and tail regions as well as in the CNS. In adults, expression is highest in the brain, eye and bone, with lower expression in the heart and lung. Not expressed in the ovary.

It is found in the secreted. Its function is as follows. Secreted protein that functions as a cytokine and growth factor and mediates its signal through cell-surface proteoglycan and non-proteoglycan receptors. Binds cell-surface proteoglycan receptors via their chondroitin sulfate (CS) groups. Thereby regulates many processes like inflammatory response, cell proliferation, cell adhesion, cell growth, cell survival, tissue regeneration, cell differentiation and cell migration. Inhibits mesoderm formation and promotes neural formation during development. Plays a role in development of the neuromuscular junction (NMJ). Has antibacterial activity against both Gram-positive and Gram-negative bacteria. This Xenopus laevis (African clawed frog) protein is Midkine-A (mdk-a).